We begin with the raw amino-acid sequence, 452 residues long: Glutathione gamma-glutamylcysteinyltransferase 2 (452 aa).

Residues 1-220 form the Peptidase C83 domain; the sequence is MSMASLYRRS…GFMLISRPHR (220 aa). The stretch at 287-315 forms a coiled coil; it reads EDVNQNLSSEEKSRLKLKQELLKQVQETK.

The protein belongs to the phytochelatin synthase family. Expressed in shoots, roots, leaves, stems and flowers.

The enzyme catalyses [Glu(-Cys)](n)-Gly + glutathione + H(+) = [Glu(-Cys)](n+1)-Gly + glycine. Its activity is regulated as follows. Requires cadmium for activity. Also activated in heterologous system by AsO(4)(3-) ions, but not by Cu(2+), Zn(2+), Mn(2+) or Ni(2+) ions. In terms of biological role, involved in the synthesis of phytochelatins (PC) and homophytochelatins (hPC), the heavy-metal-binding peptides of plants. The polypeptide is Glutathione gamma-glutamylcysteinyltransferase 2 (PCS2) (Arabidopsis thaliana (Mouse-ear cress)).